The primary structure comprises 247 residues: Pleckstrin homology domain-containing family F member 2 (247 aa).

A PH domain is found at 35–131 (VLIGEGVLTK…WMSHINKCVS (97 aa)). An FYVE-type zinc finger spans residues 152–212 (DSEATVCMRC…VCEFCYKQLS (61 aa)). Zn(2+)-binding residues include Cys158, Cys161, Cys175, Cys178, Cys183, Cys186, Cys204, and Cys207. Positions 213–247 (TGATLPPRSDSYSRQGSDFGSNNISDDDDDDDSSD) are disordered. Positions 222–236 (DSYSRQGSDFGSNNI) are enriched in polar residues. Residues 237–247 (SDDDDDDDSSD) are compositionally biased toward acidic residues.

The protein localises to the early endosome membrane. Its subcellular location is the endoplasmic reticulum. May play a role in early endosome fusion upstream of RAB5, hence regulating receptor trafficking and fluid-phase transport. Enhances cellular sensitivity to TNF-induced apoptosis. This is Pleckstrin homology domain-containing family F member 2 (plekhf2) from Danio rerio (Zebrafish).